Here is a 238-residue protein sequence, read N- to C-terminus: Valine-rich protein (238 aa).

A signal peptide spans 1 to 16 (MQAVLLVVALFGAALA).

Prismatic layer of shell (at protein level). Expressed primarily in the mantle with highest level in the mantle edge and lower level in the mantle pallium.

It localises to the secreted. In Pinctada maxima (Silver-lipped pearl oyster), this protein is Valine-rich protein.